A 968-amino-acid chain; its full sequence is Alanine--tRNA ligase, cytoplasmic (968 aa).

The residue at position 1 (M1) is an N-acetylmethionine. 2 positions are modified to phosphoserine: S3 and S8. K19 carries the post-translational modification N6-acetyllysine. ATP-binding positions include R77, H95, W176, and 214–216 (IWN). N216 and D239 together coordinate L-alanine. G243 contacts ATP. Phosphoserine occurs at positions 399 and 555. The Zn(2+) site is built by H605, H609, C723, and H727. Positions 750 to 763 (RRIVAVTGAEAQKA) match the Nuclear localization signal motif. An N6-acetyllysine modification is found at K876. K943 carries the post-translational modification N6,N6,N6-trimethyllysine; alternate. Residue K943 is modified to N6,N6-dimethyllysine; alternate. K943 carries the N6-methyllysine; alternate modification.

The protein belongs to the class-II aminoacyl-tRNA synthetase family. In terms of assembly, monomer. Interacts with ANKRD16; the interaction is direct. Zn(2+) is required as a cofactor. In terms of processing, ISGylated. Post-translationally, methylation at 'Lys-943' by METTL21C.

The protein resides in the cytoplasm. Its subcellular location is the nucleus. It catalyses the reaction tRNA(Ala) + L-alanine + ATP = L-alanyl-tRNA(Ala) + AMP + diphosphate. The catalysed reaction is (S)-lactate + ATP + H(+) = (S)-lactoyl-AMP + diphosphate. The enzyme catalyses (S)-lactoyl-AMP + L-lysyl-[protein] = N(6)-[(S)-lactoyl]-L-lysyl-[protein] + AMP + 2 H(+). With respect to regulation, the protein lactyltransferase activity is inhibited by beta-alanine. In terms of biological role, catalyzes the attachment of alanine to tRNA(Ala) in a two-step reaction: alanine is first activated by ATP to form Ala-AMP and then transferred to the acceptor end of tRNA(Ala). Also edits incorrectly charged tRNA(Ala) via its editing domain. In presence of high levels of lactate, also acts as a protein lactyltransferase that mediates lactylation of lysine residues in target proteins, such as TEAD1, TP53/p53 and YAP1. Protein lactylation takes place in a two-step reaction: lactate is first activated by ATP to form lactate-AMP and then transferred to lysine residues of target proteins. Acts as an inhibitor of TP53/p53 activity by catalyzing lactylation of TP53/p53. Acts as a positive regulator of the Hippo pathway by mediating lactylation of TEAD1 and YAP1. In Homo sapiens (Human), this protein is Alanine--tRNA ligase, cytoplasmic.